Consider the following 82-residue polypeptide: Putative antitoxin Saci_0468 (82 aa).

It belongs to the UPF0330 family.

In terms of biological role, possibly the antitoxin component of a type II toxin-antitoxin (TA) system. This Sulfolobus acidocaldarius (strain ATCC 33909 / DSM 639 / JCM 8929 / NBRC 15157 / NCIMB 11770) protein is Putative antitoxin Saci_0468.